The sequence spans 312 residues: Olfactory receptor 8G50 (312 aa).

Over 1 to 28 (MAYSNQSRVTEFIISGLTNKPELQLPLF) the chain is Extracellular. N-linked (GlcNAc...) asparagine glycosylation occurs at Asn-5. The helical transmembrane segment at 29 to 49 (LLFLGIYLFTVLGNLGMIILI) threads the bilayer. The Cytoplasmic segment spans residues 50 to 56 (LLSSHLH). Residues 57 to 77 (TPMYFFLSSLSFIDLCYSTII) traverse the membrane as a helical segment. Topologically, residues 78 to 99 (TPKMLVNFVTTKNVISYQECMT) are extracellular. A disulfide bridge connects residues Cys-97 and Cys-189. The helical transmembrane segment at 100–120 (QLYFFIAFVISECHMLAAMAY) threads the bilayer. Residues 121–143 (DRYVAICNPLLYNVTMSYQVCSW) lie on the Cytoplasmic side of the membrane. The chain crosses the membrane as a helical span at residues 144–164 (MVGGVYGMGFIGAAIHTFCML). Topologically, residues 165 to 204 (RVVFCKDNIINHYFCDLFPLMELACSSTYVNEVVLLSLSA) are extracellular. Residues 205 to 225 (FNIFIPTLTILGSYIFIIISI) traverse the membrane as a helical segment. Residues 226-244 (LRIKSTEGRFKAFSTCSSH) lie on the Cytoplasmic side of the membrane. Residues 245–265 (FSAVSVFFGSLAFMYLQPFSV) traverse the membrane as a helical segment. Residues 266-274 (SSKDKGKVS) lie on the Extracellular side of the membrane. The helical transmembrane segment at 275 to 292 (SVFYTTIVPMLNPMIYSL) threads the bilayer. Topologically, residues 293-312 (RNRDVKLALNKLFQKKKFHV) are cytoplasmic.

The protein belongs to the G-protein coupled receptor 1 family.

It localises to the cell membrane. Functionally, odorant receptor. In Mus musculus (Mouse), this protein is Olfactory receptor 8G50.